The sequence spans 374 residues: Golgi-associated kinase 1B (374 aa).

Topologically, residues 1 to 38 (MSPDRTGRGSSSSSSSLKRLVCKSFVRAWGRRRPNLRR) are cytoplasmic. Residues 39-61 (AVLLICTASAIYGIVIASQVLRG) traverse the membrane as a helical; Signal-anchor for type II membrane protein segment. Residues 62-374 (STHPGKALRK…LLQVYTRLDR (313 aa)) lie on the Extracellular side of the membrane. The span at 136–146 (VRPKKRRKYGA) shows a compositional bias: basic residues. Residues 136-177 (VRPKKRRKYGARRPGVVQDTESKKDTLWSKVPNSQHKSQAQS) form a disordered region. The span at 166–177 (VPNSQHKSQAQS) shows a compositional bias: polar residues. N-linked (GlcNAc...) asparagine glycans are attached at residues asparagine 281 and asparagine 314.

It belongs to the GASK family.

The protein resides in the golgi apparatus membrane. The sequence is that of Golgi-associated kinase 1B from Xenopus laevis (African clawed frog).